The chain runs to 455 residues: Keratin, type I cuticular Ha5 (455 aa).

A head region spans residues 1-97 (MASKCLKASF…FGEGILTGNE (97 aa)). One can recognise an IF rod domain in the interval 97-408 (EKETMQFLND…GLLDSEDCKL (312 aa)). Positions 98-132 (KETMQFLNDRLASYLEKVRQLERENAELESRIRDW) are coil 1A. The interval 133–143 (CEQQVPYLCPD) is linker 1. The segment at 144–244 (YQSYFQTIEE…HEEEVNSLRC (101 aa)) is coil 1B. Residues 245 to 260 (QLGDRLNVEVDAAPPV) form a linker 12 region. Positions 261–404 (DLNRVLNEMR…STYRGLLDSE (144 aa)) are coil 2. Residues 405-455 (DCKLPCNPCAPDHSPSKSCLPCLPAASCGPGTAHTTCSPRPICVSCPGSRF) are tail.

This sequence belongs to the intermediate filament family.

In Ovis aries (Sheep), this protein is Keratin, type I cuticular Ha5.